Reading from the N-terminus, the 151-residue chain is Cell division protein SepF (151 aa).

The disordered stretch occupies residues 31–53 (EEVEEPRRRSRTGVKQERETGQN).

Belongs to the SepF family. As to quaternary structure, homodimer. Interacts with FtsZ.

The protein resides in the cytoplasm. In terms of biological role, cell division protein that is part of the divisome complex and is recruited early to the Z-ring. Probably stimulates Z-ring formation, perhaps through the cross-linking of FtsZ protofilaments. Its function overlaps with FtsA. The protein is Cell division protein SepF of Halalkalibacterium halodurans (strain ATCC BAA-125 / DSM 18197 / FERM 7344 / JCM 9153 / C-125) (Bacillus halodurans).